The following is a 172-amino-acid chain: Adenine phosphoribosyltransferase (172 aa).

It belongs to the purine/pyrimidine phosphoribosyltransferase family. In terms of assembly, homodimer.

The protein localises to the cytoplasm. It catalyses the reaction AMP + diphosphate = 5-phospho-alpha-D-ribose 1-diphosphate + adenine. It participates in purine metabolism; AMP biosynthesis via salvage pathway; AMP from adenine: step 1/1. Functionally, catalyzes a salvage reaction resulting in the formation of AMP, that is energically less costly than de novo synthesis. The protein is Adenine phosphoribosyltransferase of Streptococcus agalactiae serotype Ia (strain ATCC 27591 / A909 / CDC SS700).